A 518-amino-acid polypeptide reads, in one-letter code: Glutamate--cysteine ligase (518 aa).

The protein belongs to the glutamate--cysteine ligase type 1 family. Type 1 subfamily.

The enzyme catalyses L-cysteine + L-glutamate + ATP = gamma-L-glutamyl-L-cysteine + ADP + phosphate + H(+). The protein operates within sulfur metabolism; glutathione biosynthesis; glutathione from L-cysteine and L-glutamate: step 1/2. The protein is Glutamate--cysteine ligase of Cronobacter sakazakii (strain ATCC BAA-894) (Enterobacter sakazakii).